We begin with the raw amino-acid sequence, 289 residues long: Proteasome subunit beta (289 aa).

The propeptide at 1-55 (MTWPLPDRLSINSAISGSAVDLSSFAEFLRRQAPELLPASIKHGGGAVGDQLPHA) is removed in mature form; by autocatalysis. Threonine 56 functions as the Nucleophile in the catalytic mechanism.

The protein belongs to the peptidase T1B family. The 20S proteasome core is composed of 14 alpha and 14 beta subunits that assemble into four stacked heptameric rings, resulting in a barrel-shaped structure. The two inner rings, each composed of seven catalytic beta subunits, are sandwiched by two outer rings, each composed of seven alpha subunits. The catalytic chamber with the active sites is on the inside of the barrel. Has a gated structure, the ends of the cylinder being occluded by the N-termini of the alpha-subunits. Is capped by the proteasome-associated ATPase, ARC.

Its subcellular location is the cytoplasm. It carries out the reaction Cleavage of peptide bonds with very broad specificity.. It functions in the pathway protein degradation; proteasomal Pup-dependent pathway. Its activity is regulated as follows. The formation of the proteasomal ATPase ARC-20S proteasome complex, likely via the docking of the C-termini of ARC into the intersubunit pockets in the alpha-rings, may trigger opening of the gate for substrate entry. Interconversion between the open-gate and close-gate conformations leads to a dynamic regulation of the 20S proteasome proteolysis activity. Component of the proteasome core, a large protease complex with broad specificity involved in protein degradation. The protein is Proteasome subunit beta of Mycobacterium marinum (strain ATCC BAA-535 / M).